The primary structure comprises 91 residues: MHLARVTGAVVSTQKSPSLIGKKLLLVRRVSADGELPASPTSGDEVAVDSVGAGVGELVLLSGGSSARHVFSGPNEAIDLAVVGIVDTLSC.

Residues 1–87 form the BMV domain; sequence MHLARVTGAV…IDLAVVGIVD (87 aa).

The protein belongs to the CcmL/EutN family. In terms of assembly, homopentamer. Interacts with shell protein PduA.

It is found in the bacterial microcompartment. The protein operates within polyol metabolism; 1,2-propanediol degradation. In terms of biological role, probably forms vertices in the shell of the bacterial microcompartment (BMC) dedicated to 1,2-propanediol (1,2-PD) degradation. Required for structural integrity of BMCs and to mitigate propionaldehyde toxicity. Functionally, the 1,2-PD-specific bacterial microcompartment (BMC) concentrates low levels of 1,2-PD catabolic enzymes, concentrates volatile reaction intermediates thus enhancing pathway flux and keeps the level of toxic, mutagenic propionaldehyde low. The protein is Bacterial microcompartment shell vertex protein PduN of Salmonella typhimurium (strain LT2 / SGSC1412 / ATCC 700720).